Consider the following 418-residue polypeptide: Endoglucanase EG-II (418 aa).

The signal sequence occupies residues 1 to 21; sequence MNKSVAPLLLAASILYGGAVA. Position 22 is a pyrrolidone carboxylic acid (glutamine 22). The CBM1 domain occupies 22–57; the sequence is QQTVWGQCGGIGWSGPTNCAPGSACSTLNPYYAQCI. Positions 58 to 91 are linker; sequence PGATTITTSTRPPSGPTTTTRATSTSSSTPPTSS. The disordered stretch occupies residues 63–91; the sequence is ITTSTRPPSGPTTTTRATSTSSSTPPTSS. A catalytic region spans residues 92–418; it reads GVRFAGVNIA…SLVSSCLARK (327 aa). A disulfide bond links cysteine 107 and cysteine 113. Asparagine 124 carries N-linked (GlcNAc) asparagine glycosylation. A disulfide bond links cysteine 183 and cysteine 190. Glutamate 239 functions as the Proton donor/acceptor in the catalytic mechanism. Disulfide bonds link cysteine 323/cysteine 359 and cysteine 364/cysteine 414. The active-site Nucleophile is glutamate 350.

This sequence belongs to the glycosyl hydrolase 5 (cellulase A) family.

Its subcellular location is the secreted. It catalyses the reaction Endohydrolysis of (1-&gt;4)-beta-D-glucosidic linkages in cellulose, lichenin and cereal beta-D-glucans.. Its function is as follows. Endoglucanase (EG) that cleaves the internal beta-1,4-glucosidic bonds in cellulose. The degradation of cellulose involves an interplay between different cellulolytic enzymes. Hydrolysis starts with EGs, which cut internal glycosidic linkages to reduce the polymerization degree of the substrate and creates new chain ends for exocellobiohydrolases (CBHs). The CBH release the disaccharide cellobiose from the non-reducing end of the cellulose polymer chain. Finally, beta-1,4-glucosidases hydrolyze the cellobiose and other short cello-oligosaccharides into glucose units. The chain is Endoglucanase EG-II (egl2) from Hypocrea jecorina (Trichoderma reesei).